The sequence spans 282 residues: 4-hydroxy-3-methylbut-2-enyl diphosphate reductase (282 aa).

C14 contributes to the [4Fe-4S] cluster binding site. H43 and H78 together coordinate (2E)-4-hydroxy-3-methylbut-2-enyl diphosphate. Residues H43 and H78 each coordinate dimethylallyl diphosphate. Residues H43 and H78 each contribute to the isopentenyl diphosphate site. C100 is a [4Fe-4S] cluster binding site. H128 contributes to the (2E)-4-hydroxy-3-methylbut-2-enyl diphosphate binding site. H128 contributes to the dimethylallyl diphosphate binding site. Isopentenyl diphosphate is bound at residue H128. E130 (proton donor) is an active-site residue. A (2E)-4-hydroxy-3-methylbut-2-enyl diphosphate-binding site is contributed by T164. C192 serves as a coordination point for [4Fe-4S] cluster. Residues S220, S221, N222, and S266 each coordinate (2E)-4-hydroxy-3-methylbut-2-enyl diphosphate. Dimethylallyl diphosphate contacts are provided by S220, S221, N222, and S266. S220, S221, N222, and S266 together coordinate isopentenyl diphosphate.

This sequence belongs to the IspH family. The cofactor is [4Fe-4S] cluster.

The catalysed reaction is isopentenyl diphosphate + 2 oxidized [2Fe-2S]-[ferredoxin] + H2O = (2E)-4-hydroxy-3-methylbut-2-enyl diphosphate + 2 reduced [2Fe-2S]-[ferredoxin] + 2 H(+). The enzyme catalyses dimethylallyl diphosphate + 2 oxidized [2Fe-2S]-[ferredoxin] + H2O = (2E)-4-hydroxy-3-methylbut-2-enyl diphosphate + 2 reduced [2Fe-2S]-[ferredoxin] + 2 H(+). It functions in the pathway isoprenoid biosynthesis; dimethylallyl diphosphate biosynthesis; dimethylallyl diphosphate from (2E)-4-hydroxy-3-methylbutenyl diphosphate: step 1/1. It participates in isoprenoid biosynthesis; isopentenyl diphosphate biosynthesis via DXP pathway; isopentenyl diphosphate from 1-deoxy-D-xylulose 5-phosphate: step 6/6. In terms of biological role, catalyzes the conversion of 1-hydroxy-2-methyl-2-(E)-butenyl 4-diphosphate (HMBPP) into a mixture of isopentenyl diphosphate (IPP) and dimethylallyl diphosphate (DMAPP). Acts in the terminal step of the DOXP/MEP pathway for isoprenoid precursor biosynthesis. This chain is 4-hydroxy-3-methylbut-2-enyl diphosphate reductase, found in Clostridium perfringens (strain SM101 / Type A).